A 265-amino-acid polypeptide reads, in one-letter code: Ribosomal RNA small subunit methyltransferase A (265 aa).

The S-adenosyl-L-methionine site is built by N13, L15, G40, E61, D85, and N103.

The protein belongs to the class I-like SAM-binding methyltransferase superfamily. rRNA adenine N(6)-methyltransferase family. RsmA subfamily.

Its subcellular location is the cytoplasm. The enzyme catalyses adenosine(1518)/adenosine(1519) in 16S rRNA + 4 S-adenosyl-L-methionine = N(6)-dimethyladenosine(1518)/N(6)-dimethyladenosine(1519) in 16S rRNA + 4 S-adenosyl-L-homocysteine + 4 H(+). Its function is as follows. Specifically dimethylates two adjacent adenosines (A1518 and A1519) in the loop of a conserved hairpin near the 3'-end of 16S rRNA in the 30S particle. May play a critical role in biogenesis of 30S subunits. This chain is Ribosomal RNA small subunit methyltransferase A, found in Aromatoleum aromaticum (strain DSM 19018 / LMG 30748 / EbN1) (Azoarcus sp. (strain EbN1)).